The primary structure comprises 296 residues: MTTTLANRPDGEGSVQVKLDPKVNIEEGALVIAVYGKGGIGKSTTSSNLSAAFSKLGKKVLQIGCDPKHDSTFTLTHKMVPTVIDILEEVDFHSEELRPQDFMFEGFNGVQCVESGGPPAGTGCGGYVTGQTVKLLKEHHLLEDTDVVIFDVLGDVVCGGFAAPLQHANYCLIVTANDFDSIFAMNRIVAAINAKAKNYKVRLGGVIANRSAELDQIEKFNEKTGLKTMAHFRNVDAIRRSRLKKCTIFEMDPEEEGVLEVQNEYLSLAKKMIDNVEPLEAEPLKDREIFDLLGFD.

ATP contacts are provided by residues 39-44 (GIGKST) and K68. Position 43 (S43) interacts with Mg(2+). [4Fe-4S] cluster-binding residues include C124 and C158. Residue 209 to 210 (NR) coordinates ATP.

The protein belongs to the NifH/BchL/ChlL family. In terms of assembly, homodimer. Protochlorophyllide reductase is composed of three subunits; ChlL, ChlN and ChlB. [4Fe-4S] cluster serves as cofactor.

It carries out the reaction chlorophyllide a + oxidized 2[4Fe-4S]-[ferredoxin] + 2 ADP + 2 phosphate = protochlorophyllide a + reduced 2[4Fe-4S]-[ferredoxin] + 2 ATP + 2 H2O. It participates in porphyrin-containing compound metabolism; chlorophyll biosynthesis (light-independent). Component of the dark-operative protochlorophyllide reductase (DPOR) that uses Mg-ATP and reduced ferredoxin to reduce ring D of protochlorophyllide (Pchlide) to form chlorophyllide a (Chlide). This reaction is light-independent. The L component serves as a unique electron donor to the NB-component of the complex, and binds Mg-ATP. This is Light-independent protochlorophyllide reductase iron-sulfur ATP-binding protein from Prochlorococcus marinus (strain SARG / CCMP1375 / SS120).